The sequence spans 259 residues: Indole-diterpene biosynthesis cluster protein S (259 aa).

Transmembrane regions (helical) follow at residues 5–25, 64–84, 87–107, 134–154, and 221–241; these read EASG…GMVW, WFAL…AIIL, VYLI…LWVL, VLWF…AASF, and LGAG…PAAG.

Belongs to the ltmS family.

It localises to the membrane. Part of the gene cluster that mediates the biosynthesis of paspalitrems, indole-diterpene (IDT) mycotoxins that are potent tremorgens in mammals. The geranylgeranyl diphosphate (GGPP) synthase idtG is proposed to catalyze the first step in IDT biosynthesis via catalysis of a series of iterative condensations of isopentenyl diphosphate (IPP) with dimethylallyl diphosphate (DMAPP), geranyl diphosphate (GPP), and farnesyl diphosphate (FPP), to form GGPP. Condensation of indole-3-glycerol phosphate with GGPP by the prenyltransferase idtC then forms 3-geranylgeranylindole (3-GGI). Epoxidation of the two terminal alkenes of the geranylgeranyl moiety by the FAD-dependent monooxygenase idtM, and cyclization by the terpene cyclase idtB then leads to the production of paspaline. The cytochrome P450 monooxygenase idtP then catalyzes oxidative elimination of the pendant methyl group at C-12 of paspaline and generates the C-10 ketone to yield 13-desoxypaxilline. The cytochrome P450 monooxygenase idtQ may catalyze the C-13 oxidation of 13-desoxypaxilline to afford paxilline. Considering that both paspalicine and paxilline were detected in C.paspali, idtQ also catalyzes the formation of paspalinine from 13-desoxypaxilline via paspalicine as an intermediate. Finally, the alpha-prenyltransferase idtF prenylates paspalinine at the C-20 or the C-21 positions to yield paspalitrems A and C, respectively. The hydroxylation of paspalitrem A at C-32 by a still unknown oxidase affords paspalitrem B. The sequence is that of Indole-diterpene biosynthesis cluster protein S from Claviceps paspali (Rye ergot fungus).